The sequence spans 638 residues: Phosphomethylpyrimidine synthase (638 aa).

Residues asparagine 236, methionine 265, tyrosine 294, histidine 330, 350-352 (SRG), 391-394 (DGLR), and glutamate 430 contribute to the substrate site. Zn(2+) is bound at residue histidine 434. Tyrosine 457 serves as a coordination point for substrate. Residue histidine 498 participates in Zn(2+) binding. The [4Fe-4S] cluster site is built by cysteine 578, cysteine 581, and cysteine 586. Residues 608–624 (AEGASQQEAEQGMQEMS) show a composition bias toward low complexity. Residues 608-633 (AEGASQQEAEQGMQEMSQKYKDAGRR) are disordered.

Belongs to the ThiC family. In terms of assembly, homodimer. [4Fe-4S] cluster serves as cofactor.

It catalyses the reaction 5-amino-1-(5-phospho-beta-D-ribosyl)imidazole + S-adenosyl-L-methionine = 4-amino-2-methyl-5-(phosphooxymethyl)pyrimidine + CO + 5'-deoxyadenosine + formate + L-methionine + 3 H(+). The protein operates within cofactor biosynthesis; thiamine diphosphate biosynthesis. Its function is as follows. Catalyzes the synthesis of the hydroxymethylpyrimidine phosphate (HMP-P) moiety of thiamine from aminoimidazole ribotide (AIR) in a radical S-adenosyl-L-methionine (SAM)-dependent reaction. The chain is Phosphomethylpyrimidine synthase from Hahella chejuensis (strain KCTC 2396).